The chain runs to 235 residues: Demethylmenaquinone methyltransferase (235 aa).

S-adenosyl-L-methionine-binding positions include Thr58, Asp79, and 106 to 107 (NA).

The protein belongs to the class I-like SAM-binding methyltransferase superfamily. MenG/UbiE family.

The catalysed reaction is a 2-demethylmenaquinol + S-adenosyl-L-methionine = a menaquinol + S-adenosyl-L-homocysteine + H(+). The protein operates within quinol/quinone metabolism; menaquinone biosynthesis; menaquinol from 1,4-dihydroxy-2-naphthoate: step 2/2. Methyltransferase required for the conversion of demethylmenaquinol (DMKH2) to menaquinol (MKH2). The chain is Demethylmenaquinone methyltransferase from Shouchella clausii (strain KSM-K16) (Alkalihalobacillus clausii).